The primary structure comprises 262 residues: ELL-associated factor 2 (262 aa).

The interval 17–104 (LKLGESFEKQ…TGECRLEKLS (88 aa)) is necessary for interaction with ELL. Phosphoserine is present on residues Ser-146, Ser-151, and Ser-154. Residues 170 to 237 (MDQMSSCDSS…EADATCHRLQ (68 aa)) form a disordered region. A compositionally biased stretch (low complexity) spans 174–192 (SSCDSSSDSKSSSSSSSED). Residues 177–262 (DSSSDSKSSS…LSESESDSED (86 aa)) form a necessary for transactivation activity region. The span at 193–202 (SSSDSEDDDQ) shows a compositional bias: acidic residues. Over residues 227-237 (SEADATCHRLQ) the composition is skewed to basic and acidic residues. The segment at 248–262 (RSDLQLSESESDSED) is necessary for interaction with TCEA1 and transactivation activity.

The protein belongs to the EAF family. In terms of assembly, component of the super elongation complex (SEC), at least composed of EAF1, EAF2, CDK9, MLLT3/AF9, AFF (AFF1 or AFF4), the P-TEFb complex and ELL (ELL, ELL2 or ELL3). Interacts with ELL and ELL2. Isoform 1 and isoform 2 interact with TCEA1. Isoform 1 is expressed in ovary, uterus, mammary glands, brain, spleen, liver, lung, thymus, kidney, skeletal muscle, skin and testis. Isoform 2 is expressed in kidney.

Its subcellular location is the nucleus speckle. Acts as a transcriptional transactivator of ELL and ELL2 elongation activities. Acts as a transcriptional transactivator of TCEA1 elongation activity. This chain is ELL-associated factor 2 (Eaf2), found in Mus musculus (Mouse).